We begin with the raw amino-acid sequence, 157 residues long: Histone H2B.3 (157 aa).

Positions 1–64 (MAPKKEEKPA…DKKSKKKAKV (64 aa)) are disordered. The segment covering 26–42 (KAVKAPKKKEKKAPAKK) has biased composition (basic residues). Residue lysine 153 forms a Glycyl lysine isopeptide (Lys-Gly) (interchain with G-Cter in ubiquitin) linkage.

It belongs to the histone H2B family. The nucleosome is a histone octamer containing two molecules each of H2A, H2B, H3 and H4 assembled in one H3-H4 heterotetramer and two H2A-H2B heterodimers. The octamer wraps approximately 147 bp of DNA. In terms of processing, monoubiquitinated to form H2BK143ub1; may give a specific tag for epigenetic transcriptional activation.

The protein localises to the nucleus. The protein resides in the chromosome. Functionally, core component of nucleosome. Nucleosomes wrap and compact DNA into chromatin, limiting DNA accessibility to the cellular machineries which require DNA as a template. Histones thereby play a central role in transcription regulation, DNA repair, DNA replication and chromosomal stability. DNA accessibility is regulated via a complex set of post-translational modifications of histones, also called histone code, and nucleosome remodeling. This chain is Histone H2B.3, found in Volvox carteri (Green alga).